A 340-amino-acid chain; its full sequence is MKSLVKAKKEPGIWMQDVPVPEYGVNDVLIKIKRTAICGTDIHIYSWDEWAQATIPVPMTVGHEFYGEIVEVGKEVQGLKVGQRVSGEGHITCGFCRNCRAGKRHLCRNTLGVGVNRPGCFAEYLALPATNVIALPDNITEEQAAILDPFGNAAHCALAFDVVGEDVLITGAGPIGIMAAAIVRHIGARHVVITDVNDHRLELARQMGVSRAVNVKYQKLSDVANELGMLEGFDVGLEMSGNPMALNDMMKAMNHGGHVALLGIPPQETPIDWNQVIFKGLVIKGIYGREMFETWYKMIAMLQSGLNISPVITHNFPVDEYQHAFQIMASGQSGKVILNW.

C38 is a binding site for Zn(2+). Residues T40 and H43 each act as charge relay system in the active site. Zn(2+)-binding residues include H63, E64, C93, C96, C99, and C107. NAD(+)-binding positions include I175, D195, R200, 262–264 (LGI), and 286–287 (IY).

This sequence belongs to the zinc-containing alcohol dehydrogenase family. In terms of assembly, homotetramer. It depends on Zn(2+) as a cofactor.

It is found in the cytoplasm. It catalyses the reaction L-threonine + NAD(+) = (2S)-2-amino-3-oxobutanoate + NADH + H(+). Its pathway is amino-acid degradation; L-threonine degradation via oxydo-reductase pathway; glycine from L-threonine: step 1/2. Its function is as follows. Catalyzes the NAD(+)-dependent oxidation of L-threonine to 2-amino-3-ketobutyrate. This is L-threonine 3-dehydrogenase from Legionella pneumophila (strain Corby).